A 226-amino-acid polypeptide reads, in one-letter code: Protein-L-isoaspartate O-methyltransferase (226 aa).

Ser75 is a catalytic residue.

This sequence belongs to the methyltransferase superfamily. L-isoaspartyl/D-aspartyl protein methyltransferase family.

Its subcellular location is the cytoplasm. The enzyme catalyses [protein]-L-isoaspartate + S-adenosyl-L-methionine = [protein]-L-isoaspartate alpha-methyl ester + S-adenosyl-L-homocysteine. Its function is as follows. Catalyzes the methyl esterification of L-isoaspartyl residues in peptides and proteins that result from spontaneous decomposition of normal L-aspartyl and L-asparaginyl residues. It plays a role in the repair and/or degradation of damaged proteins. This is Protein-L-isoaspartate O-methyltransferase from Lawsonia intracellularis (strain PHE/MN1-00).